The chain runs to 153 residues: Methylglyoxal synthase (153 aa).

In terms of domain architecture, MGS-like spans Arg6–Ser153. Substrate is bound by residues His19, Lys23, Thr45 to Thr48, and Ser65 to Gly66. Asp71 functions as the Proton donor/acceptor in the catalytic mechanism. Substrate is bound at residue His98.

Belongs to the methylglyoxal synthase family.

The catalysed reaction is dihydroxyacetone phosphate = methylglyoxal + phosphate. In terms of biological role, catalyzes the formation of methylglyoxal from dihydroxyacetone phosphate. The polypeptide is Methylglyoxal synthase (Sodalis glossinidius (strain morsitans)).